Consider the following 557-residue polypeptide: E3 ubiquitin-protein ligase ARIH1 (557 aa).

A compositionally biased stretch (acidic residues) spans 1 to 47 (MDSDEGYNYEFDEDEECSEEDSGAEEEEDEDDDEPDDDTLDLGEVEL). The tract at residues 1–95 (MDSDEGYNYE…GGGGGPGHEQ (95 aa)) is disordered. A compositionally biased stretch (gly residues) spans 65–92 (ETGGGGGSALGPGGGGGGGGGGGGGGPG). The tract at residues 105–153 (TAEQILQHMVECIREVNEVIQNPATITRILLSHFNWDKEKLMERYFDGN) is UBA-like. Residue Lys-142 is modified to N6-acetyllysine. A TRIAD supradomain region spans residues 182–393 (QDMPCQICYL…SAWYNCNRYN (212 aa)). Zn(2+)-binding residues include Cys-186, Cys-189, Cys-203, His-205, Cys-208, Cys-211, Cys-231, Cys-236, Cys-276, Cys-281, Cys-297, Cys-299, Cys-304, Cys-307, His-312, Cys-317, Cys-344, and Cys-347. The RING-type 1 zinc finger occupies 186-236 (CQICYLNYPNSYFTGLECGHKFCMQCWSEYLTTKIMEEGMGQTISCPAHGC). Residues 256 to 317 (LKYQHLITNS…GENWHDPVKC (62 aa)) form an IBR-type zinc finger. An RING-type 2; atypical zinc finger spans residues 344-375 (CPKCHVTIEKDGGCNHMVCRNQNCKAEFCWVC). Cys-357 is an active-site residue. Positions 362, 367, 372, 375, 382, and 389 each coordinate Zn(2+). The ariadne domain stretch occupies residues 408–557 (RAALQRYLFY…EKDLWEYIED (150 aa)).

Belongs to the RBR family. Ariadne subfamily. In terms of assembly, interacts (via the first RING-type zinc finger) with UBE2L3. Associates with cullin-RING ubiquitin ligase (CRL) complexes containing CUL1, CUL2 and CUL3. Interacts with neddylated CUL1. Interacts with neddylated CUL2. Interacts with neddylated CUL3. Interacts with neddylated CUL4A. As to expression, widely expressed.

Its subcellular location is the cytoplasm. The protein localises to the nucleus. The protein resides in the cajal body. It carries out the reaction [E2 ubiquitin-conjugating enzyme]-S-ubiquitinyl-L-cysteine + [acceptor protein]-L-lysine = [E2 ubiquitin-conjugating enzyme]-L-cysteine + [acceptor protein]-N(6)-ubiquitinyl-L-lysine.. Its pathway is protein modification; protein ubiquitination. Autoinhibited by the ariadne domain, which masks the second RING-type zinc finger that contains the active site and inhibits the E3 activity. Inhibition is relieved upon binding to neddylated cullin-RING ubiquitin ligase complexes, which activate the E3 ligase activity of ARIH1. Functionally, E3 ubiquitin-protein ligase, which catalyzes ubiquitination of target proteins together with ubiquitin-conjugating enzyme E2 UBE2L3. Acts as an atypical E3 ubiquitin-protein ligase by working together with cullin-RING ubiquitin ligase (CRL) complexes and initiating ubiquitination of CRL substrates: associates with CRL complexes and specifically mediates addition of the first ubiquitin on CRLs targets. The initial ubiquitin is then elongated by CDC34/UBE2R1 and UBE2R2. E3 ubiquitin-protein ligase activity is activated upon binding to neddylated cullin-RING ubiquitin ligase complexes. Plays a role in protein translation in response to DNA damage by mediating ubiquitination of EIF4E2, the consequences of EIF4E2 ubiquitination are however unclear. According to a report, EIF4E2 ubiquitination leads to promote EIF4E2 cap-binding and protein translation arrest. According to another report EIF4E2 ubiquitination leads to its subsequent degradation. Acts as the ligase involved in ISGylation of EIF4E2. In vitro, controls the degradation of the LINC (LInker of Nucleoskeleton and Cytoskeleton) complex member SUN2 and may therefore have a role in the formation and localization of the LINC complex, and as a consequence, nuclear subcellular localization and nuclear morphology. The protein is E3 ubiquitin-protein ligase ARIH1 of Homo sapiens (Human).